The sequence spans 315 residues: Protein LST8 homolog (315 aa).

8 WD repeats span residues 1–31 (MGDQ…KTMR), 33–71 (VETS…TAPV), 76–115 (GVQK…PHCS), 119–158 (DCES…HECI), 161–200 (EVDA…DQKM), 211–250 (AHTR…KWRE), 253–292 (IENY…PTRE), and 295–315 (GHTK…KVNH).

This sequence belongs to the WD repeat LST8 family.

It localises to the cytoplasm. In Drosophila pseudoobscura pseudoobscura (Fruit fly), this protein is Protein LST8 homolog.